Consider the following 551-residue polypeptide: Periplasmic [NiFe] hydrogenase large subunit (551 aa).

Positions 65, 68, 530, and 533 each coordinate Ni(2+). The propeptide occupies 537 to 551 (VIDPESNQVHKFRIL).

The protein belongs to the [NiFe]/[NiFeSe] hydrogenase large subunit family. In terms of assembly, heterodimer of a large and a small subunit. It depends on Ni(2+) as a cofactor.

The protein localises to the periplasm. The enzyme catalyses 2 Fe(III)-[cytochrome c3] + H2 = 2 Fe(II)-[cytochrome c3] + 2 H(+). This chain is Periplasmic [NiFe] hydrogenase large subunit (hydB), found in Megalodesulfovibrio gigas (Desulfovibrio gigas).